A 179-amino-acid polypeptide reads, in one-letter code: Acireductone dioxygenase (179 aa).

The disordered stretch occupies residues 7 to 26 (MDDAPGDPRQPHRPDPGRPV). Residues His88, His90, Glu94, and His133 each contribute to the Fe(2+) site. Ni(2+)-binding residues include His88, His90, Glu94, and His133.

The protein belongs to the acireductone dioxygenase (ARD) family. As to quaternary structure, monomer. Interacts with MMP14. It depends on Fe(2+) as a cofactor. Ni(2+) serves as cofactor. Detected in heart, colon, lung, stomach, brain, spleen, liver, skeletal muscle and kidney.

Its subcellular location is the cytoplasm. The protein resides in the nucleus. The protein localises to the cell membrane. The enzyme catalyses 1,2-dihydroxy-5-(methylsulfanyl)pent-1-en-3-one + O2 = 4-methylsulfanyl-2-oxobutanoate + formate + 2 H(+). The catalysed reaction is 1,2-dihydroxy-5-(methylsulfanyl)pent-1-en-3-one + O2 = 3-(methylsulfanyl)propanoate + CO + formate + 2 H(+). It participates in amino-acid biosynthesis; L-methionine biosynthesis via salvage pathway; L-methionine from S-methyl-5-thio-alpha-D-ribose 1-phosphate: step 5/6. Functionally, catalyzes 2 different reactions between oxygen and the acireductone 1,2-dihydroxy-3-keto-5-methylthiopentene (DHK-MTPene) depending upon the metal bound in the active site. Fe-containing acireductone dioxygenase (Fe-ARD) produces formate and 2-keto-4-methylthiobutyrate (KMTB), the alpha-ketoacid precursor of methionine in the methionine recycle pathway. Ni-containing acireductone dioxygenase (Ni-ARD) produces methylthiopropionate, carbon monoxide and formate, and does not lie on the methionine recycle pathway. Also down-regulates cell migration mediated by MMP14. Necessary for hepatitis C virus replication in an otherwise non-permissive cell line. In Homo sapiens (Human), this protein is Acireductone dioxygenase.